We begin with the raw amino-acid sequence, 437 residues long: GTPase Obg (437 aa).

One can recognise an Obg domain in the interval 2 to 160 (SMFLDTAKVS…RQLELELKIL (159 aa)). The OBG-type G domain maps to 161–338 (ADVGLVGFPS…LLEATAELLA (178 aa)). GTP is bound by residues 167–174 (GFPSVGKS), 192–196 (FTTIV), 214–217 (DLPG), 284–287 (NKMD), and 319–321 (SSL). Positions 174 and 194 each coordinate Mg(2+). One can recognise an OCT domain in the interval 359-437 (GFAAEEKAFE…IGKFEFEFVD (79 aa)).

The protein belongs to the TRAFAC class OBG-HflX-like GTPase superfamily. OBG GTPase family. In terms of assembly, monomer. Mg(2+) serves as cofactor.

Its subcellular location is the cytoplasm. Its function is as follows. An essential GTPase which binds GTP, GDP and possibly (p)ppGpp with moderate affinity, with high nucleotide exchange rates and a fairly low GTP hydrolysis rate. Plays a role in control of the cell cycle, stress response, ribosome biogenesis and in those bacteria that undergo differentiation, in morphogenesis control. This is GTPase Obg from Streptococcus equi subsp. equi (strain 4047).